We begin with the raw amino-acid sequence, 78 residues long: uncharacterized protein (78 aa).

A signal peptide spans 1-27 (MQNSKTDMCAALWAVTGLVLNVAVRFA).

This is an uncharacterized protein from Dryophytes versicolor (chameleon treefrog).